Consider the following 260-residue polypeptide: Coiled-coil domain-containing protein 127 (260 aa).

A coiled-coil region spans residues 49-135 (QKEVEKEREA…QVMQEKRQVQ (87 aa)).

In Homo sapiens (Human), this protein is Coiled-coil domain-containing protein 127 (CCDC127).